The chain runs to 151 residues: Caveolin-3 (151 aa).

Over 1–83 the chain is Cytoplasmic; it reads MMTEEHTDLE…RLLSTLLGVP (83 aa). Residue Lys-38 forms a Glycyl lysine isopeptide (Lys-Gly) (interchain with G-Cter in SUMO3) linkage. The helical intramembrane region spans 84-104; it reads LALLWGFLFACISFCHIWAVV. Residues 105 to 151 are Cytoplasmic-facing; it reads PCIKSYLIEIQCISHIYSLCIRTFCNPLFAALGQVCSNIKVVLRREG.

The protein belongs to the caveolin family. In terms of assembly, homooligomer. Interacts with DYSF. Interacts with DLG1 and KCNA5; forms a ternary complex. Interacts with DAG1 (via its C-terminal); the interaction prevents binding of DAG1 with DMD. Interacts with TRIM72. Interacts with MUSK; may regulate MUSK signaling. Interacts with POPDC1. Interacts with CAVIN1, CAVIN2 and CAVIN4. Sumoylation with SUMO3 by PIAS4 may reduce agonist-induced internalization and desensitization of adrenergic receptor ABRD2. In terms of tissue distribution, expressed predominantly in muscle.

The protein resides in the golgi apparatus membrane. It is found in the cell membrane. It localises to the membrane. Its subcellular location is the caveola. The protein localises to the sarcolemma. Its function is as follows. May act as a scaffolding protein within caveolar membranes. Interacts directly with G-protein alpha subunits and can functionally regulate their activity. May also regulate voltage-gated potassium channels. Plays a role in the sarcolemma repair mechanism of both skeletal muscle and cardiomyocytes that permits rapid resealing of membranes disrupted by mechanical stress. Mediates the recruitment of CAVIN2 and CAVIN3 proteins to the caveolae. This chain is Caveolin-3 (Cav3), found in Rattus norvegicus (Rat).